Consider the following 555-residue polypeptide: Dihydroxy-acid dehydratase (555 aa).

Position 78 (D78) interacts with Mg(2+). C119 is a [2Fe-2S] cluster binding site. Mg(2+) is bound by residues D120 and K121. Position 121 is an N6-carboxylysine (K121). C191 lines the [2Fe-2S] cluster pocket. A Mg(2+)-binding site is contributed by E444. S470 acts as the Proton acceptor in catalysis.

It belongs to the IlvD/Edd family. As to quaternary structure, homodimer. [2Fe-2S] cluster is required as a cofactor. Requires Mg(2+) as cofactor.

It catalyses the reaction (2R)-2,3-dihydroxy-3-methylbutanoate = 3-methyl-2-oxobutanoate + H2O. The enzyme catalyses (2R,3R)-2,3-dihydroxy-3-methylpentanoate = (S)-3-methyl-2-oxopentanoate + H2O. The protein operates within amino-acid biosynthesis; L-isoleucine biosynthesis; L-isoleucine from 2-oxobutanoate: step 3/4. It participates in amino-acid biosynthesis; L-valine biosynthesis; L-valine from pyruvate: step 3/4. In terms of biological role, functions in the biosynthesis of branched-chain amino acids. Catalyzes the dehydration of (2R,3R)-2,3-dihydroxy-3-methylpentanoate (2,3-dihydroxy-3-methylvalerate) into 2-oxo-3-methylpentanoate (2-oxo-3-methylvalerate) and of (2R)-2,3-dihydroxy-3-methylbutanoate (2,3-dihydroxyisovalerate) into 2-oxo-3-methylbutanoate (2-oxoisovalerate), the penultimate precursor to L-isoleucine and L-valine, respectively. The protein is Dihydroxy-acid dehydratase of Nitratidesulfovibrio vulgaris (strain DSM 19637 / Miyazaki F) (Desulfovibrio vulgaris).